The sequence spans 357 residues: Glucose-6-phosphatase catalytic subunit 1 (357 aa).

Topologically, residues 1 to 28 (MEERMNVLHDFGIQSTRYLQVNYEDSQD) are lumenal. The chain crosses the membrane as a helical span at residues 29 to 49 (WFVLVSVIADLRNAFYVLFPI). Residues 50 to 60 (WFHIQETVGIN) lie on the Cytoplasmic side of the membrane. A helical transmembrane segment spans residues 61–81 (LLWVAVVGDWFNLVFKWILFG). The Lumenal portion of the chain corresponds to 82–117 (QRPYWWVLDTDYYSNSSVPLIKQFPVTCETGPGSPS). Arg83 is a binding site for substrate. An N-linked (GlcNAc...) asparagine glycan is attached at Asn96. A helical transmembrane segment spans residues 118–138 (GHAMGTAGVYYVMVTSTLAIF). The active-site Proton donor is the His119. Topologically, residues 139–147 (RGKKKSTYG) are cytoplasmic. A helical transmembrane segment spans residues 148–168 (FRCLNVVLWLGYWAVQLNVCL). The Lumenal segment spans residues 169 to 170 (SR). Arg170 lines the substrate pocket. Residues 171–191 (IYLAAHFPHQVVAGVLSGIAV) form a helical membrane-spanning segment. His176 acts as the Nucleophile in catalysis. The Cytoplasmic portion of the chain corresponds to 192-211 (AETFSHIRGIYNASLQRYCL). A helical transmembrane segment spans residues 212-232 (ITFFLFGFALGFYLLLKGLGV). The Lumenal portion of the chain corresponds to 233-254 (DLLWTLEKAKRWCERPEWVHLD). A helical membrane pass occupies residues 255 to 275 (TTPFASLFKNLGTLLGLGLAL). The Cytoplasmic segment spans residues 276 to 291 (NSSMYRKSCKGELRKS). The chain crosses the membrane as a helical span at residues 292–312 (LPFRLACIVASLGLLHLFDSL). Residues 313 to 320 (KPPSQIES) are Lumenal-facing. The helical transmembrane segment at 321 to 341 (IFYILSFCKSATVPFASVSLI) threads the bilayer. Residues 342–357 (PYCLARLLGQTHKKSL) are Cytoplasmic-facing. Positions 354 to 357 (KKSL) match the Prevents secretion from ER motif.

The protein belongs to the glucose-6-phosphatase family.

The protein localises to the endoplasmic reticulum membrane. It catalyses the reaction D-glucose 6-phosphate + H2O = D-glucose + phosphate. It participates in carbohydrate biosynthesis; gluconeogenesis. Its function is as follows. Hydrolyzes glucose-6-phosphate to glucose in the endoplasmic reticulum. Forms with the glucose-6-phosphate transporter (SLC37A4/G6PT) the complex responsible for glucose production in the terminal step of glycogenolysis and gluconeogenesis. Hence, it is the key enzyme in homeostatic regulation of blood glucose levels. The chain is Glucose-6-phosphatase catalytic subunit 1 (G6pc1) from Rattus norvegicus (Rat).